The sequence spans 337 residues: Schlafen family member 1 (337 aa).

The disordered stretch occupies residues 147-166; that stretch reads AGGRSPSARPSDRPGDDTQE. Basic and acidic residues predominate over residues 156–166; that stretch reads PSDRPGDDTQE.

This sequence belongs to the Schlafen family. Interacts with DNAJB6; promoting nuclear translocation and ability to promote cell-cycle arrest. In terms of tissue distribution, mainly expressed in the thymus, lymph node and spleen. Specifically expressed in T-lineage cells, but not in B-cells. Strongly up-regulated during the differentiation from CD4(+)CD8(+) double-positive (DP) to CD4(+) or CD8(+) single-positive (SP) thymocytes. Highly expressed in quiescent single-positive thymocytes and T-cells. The expression substantially decreases after TCR (T-cell receptor)-mediated activation.

The protein localises to the cytoplasm. Its subcellular location is the nucleus. Protein expressed in resting T-cells, which is required for maintaining T-cells in the quiescent state. Acts by promoting cell-cycle arrest of T-cells through inhibiting the expression of cyclin-D1 (CCND1). The protein is Schlafen family member 1 of Mus musculus (Mouse).